A 158-amino-acid chain; its full sequence is Flagellar assembly factor FliW (158 aa).

This sequence belongs to the FliW family. Interacts with translational regulator CsrA and flagellin(s).

Its subcellular location is the cytoplasm. In terms of biological role, acts as an anti-CsrA protein, binds CsrA and prevents it from repressing translation of its target genes, one of which is flagellin. Binds to flagellin and participates in the assembly of the flagellum. The polypeptide is Flagellar assembly factor FliW (Moorella thermoacetica (strain ATCC 39073 / JCM 9320)).